A 199-amino-acid chain; its full sequence is Tropomyosin-1 (199 aa).

The stretch at 1 to 199 (MDKIREKLSN…DEIAASLENL (199 aa)) forms a coiled coil. Residues Lys39 and Lys59 each participate in a glycyl lysine isopeptide (Lys-Gly) (interchain with G-Cter in ubiquitin) cross-link. Disordered regions lie at residues 59–81 (KLEA…ENQI) and 102–147 (LAES…TEKL). Composition is skewed to basic and acidic residues over residues 68–80 (KQTE…KENQ) and 102–114 (LAES…DSHH). Positions 115 to 126 (LQSNNDNFSKKN) are enriched in polar residues. The segment covering 136–147 (SDTKLKETTEKL) has biased composition (basic and acidic residues). Residue Lys187 forms a Glycyl lysine isopeptide (Lys-Gly) (interchain with G-Cter in ubiquitin) linkage. Residue Ser195 is modified to Phosphoserine.

As to quaternary structure, homodimer.

It is found in the cytoplasm. It localises to the cytoskeleton. This chain is Tropomyosin-1 (TPM1), found in Saccharomyces cerevisiae (strain ATCC 204508 / S288c) (Baker's yeast).